Consider the following 316-residue polypeptide: Ribosomal protein L11 methyltransferase (316 aa).

The S-adenosyl-L-methionine site is built by threonine 157, glycine 178, aspartate 200, and asparagine 243.

Belongs to the methyltransferase superfamily. PrmA family.

It is found in the cytoplasm. It catalyses the reaction L-lysyl-[protein] + 3 S-adenosyl-L-methionine = N(6),N(6),N(6)-trimethyl-L-lysyl-[protein] + 3 S-adenosyl-L-homocysteine + 3 H(+). Functionally, methylates ribosomal protein L11. The protein is Ribosomal protein L11 methyltransferase of Streptococcus pneumoniae (strain P1031).